Reading from the N-terminus, the 331-residue chain is MPPASRTRVQRRPVHGVLLLDKPLALSSNQALQKAKWLLRAEKAGHTGTLDPLATGVLPLCFGAATKFSQLQLDAPKTYEAIALPGVTTSTGDAEGAVLQRCAVDPAQLAPERLSAVQRQFTGPISQLPPMHSALKKDGRALYTYARAGIALERAARAVVIHALELSLVQHAPAQTAIKIAVTCSKGCYIRTLAEDIGAALGCGAHLSALRRTDSGGIGIERCISLERLQALPEAERLACLQPPQSLLTRHLRVTLDSDNAARFLSGLPRRGAWPDAPAVAVFGADPPALLGVGHIAGGCLLPDRLLSALEIAQILASQPQRQDCGILEET.

Catalysis depends on Asp51, which acts as the Nucleophile.

The protein belongs to the pseudouridine synthase TruB family. Type 1 subfamily.

The enzyme catalyses uridine(55) in tRNA = pseudouridine(55) in tRNA. Responsible for synthesis of pseudouridine from uracil-55 in the psi GC loop of transfer RNAs. The protein is tRNA pseudouridine synthase B of Verminephrobacter eiseniae (strain EF01-2).